A 249-amino-acid chain; its full sequence is Phosphatidylserine decarboxylase proenzyme (249 aa).

Residue serine 208 is the Schiff-base intermediate with substrate; via pyruvic acid of the active site. Serine 208 is modified (pyruvic acid (Ser); by autocatalysis).

It belongs to the phosphatidylserine decarboxylase family. PSD-A subfamily. As to quaternary structure, heterodimer of a large membrane-associated beta subunit and a small pyruvoyl-containing alpha subunit. The cofactor is pyruvate. Post-translationally, is synthesized initially as an inactive proenzyme. Formation of the active enzyme involves a self-maturation process in which the active site pyruvoyl group is generated from an internal serine residue via an autocatalytic post-translational modification. Two non-identical subunits are generated from the proenzyme in this reaction, and the pyruvate is formed at the N-terminus of the alpha chain, which is derived from the carboxyl end of the proenzyme. The post-translation cleavage follows an unusual pathway, termed non-hydrolytic serinolysis, in which the side chain hydroxyl group of the serine supplies its oxygen atom to form the C-terminus of the beta chain, while the remainder of the serine residue undergoes an oxidative deamination to produce ammonia and the pyruvoyl prosthetic group on the alpha chain.

Its subcellular location is the cell membrane. It catalyses the reaction a 1,2-diacyl-sn-glycero-3-phospho-L-serine + H(+) = a 1,2-diacyl-sn-glycero-3-phosphoethanolamine + CO2. It participates in phospholipid metabolism; phosphatidylethanolamine biosynthesis; phosphatidylethanolamine from CDP-diacylglycerol: step 2/2. Functionally, catalyzes the formation of phosphatidylethanolamine (PtdEtn) from phosphatidylserine (PtdSer). The protein is Phosphatidylserine decarboxylase proenzyme of Erythrobacter litoralis (strain HTCC2594).